The following is a 90-amino-acid chain: Accessory gland-specific peptide 26Ab (90 aa).

A signal peptide spans 1 to 21 (MNYFAVLCIFSCICLWQFSDA).

Main cells of the accessory glands of males.

It localises to the secreted. The protein localises to the extracellular space. Functionally, this protein is transferred from male to female during mating and may affect egglaying and behavior after mating. This is Accessory gland-specific peptide 26Ab (Acp26Ab) from Drosophila sechellia (Fruit fly).